A 351-amino-acid chain; its full sequence is Peptide chain release factor 1 (351 aa).

Position 229 is an N5-methylglutamine (glutamine 229). Positions 279 to 300 (ADAERAADRKSQVGSGDRSERI) are disordered.

The protein belongs to the prokaryotic/mitochondrial release factor family. In terms of processing, methylated by PrmC. Methylation increases the termination efficiency of RF1.

It localises to the cytoplasm. Functionally, peptide chain release factor 1 directs the termination of translation in response to the peptide chain termination codons UAG and UAA. This is Peptide chain release factor 1 from Paracoccus denitrificans (strain Pd 1222).